The following is a 254-amino-acid chain: 5-oxoprolinase subunit A (254 aa).

The protein belongs to the LamB/PxpA family. Forms a complex composed of PxpA, PxpB and PxpC.

The catalysed reaction is 5-oxo-L-proline + ATP + 2 H2O = L-glutamate + ADP + phosphate + H(+). Catalyzes the cleavage of 5-oxoproline to form L-glutamate coupled to the hydrolysis of ATP to ADP and inorganic phosphate. The sequence is that of 5-oxoprolinase subunit A from Carboxydothermus hydrogenoformans (strain ATCC BAA-161 / DSM 6008 / Z-2901).